Consider the following 372-residue polypeptide: Glutamine synthetase (372 aa).

Residues 26–105 (IIAEYVWIDS…VLAECWNNDG (80 aa)) enclose the GS beta-grasp domain. Residues 112–372 (HRHEAAKLFE…MTKEYERESL (261 aa)) form the GS catalytic domain.

It belongs to the glutamine synthetase family. Homooctamer.

It is found in the cytoplasm. The enzyme catalyses L-glutamate + NH4(+) + ATP = L-glutamine + ADP + phosphate + H(+). The protein is Glutamine synthetase (GLN1) of Kluyveromyces lactis (strain ATCC 8585 / CBS 2359 / DSM 70799 / NBRC 1267 / NRRL Y-1140 / WM37) (Yeast).